The primary structure comprises 624 residues: Histone-lysine N-methyltransferase, H3 lysine-9 specific SUVH4 (624 aa).

Disordered stretches follow at residues 1–25 and 54–86; these read MAGK…VQKV and DDTE…KGKQ. In terms of domain architecture, YDG spans 149-302; the sequence is GDLPGIDVGH…FTVYKYRLKR (154 aa). The 63-residue stretch at 381-443 folds into the Pre-SET domain; sequence TGCNCRGSCT…KCVNRTSQKR (63 aa). C383, C385, C389, C395, C397, C425, C429, C431, and C435 together coordinate Zn(2+). An SET domain is found at 446 to 594; the sequence is FNLEVFRSAK…PMQELTYDYG (149 aa). S-adenosyl-L-methionine contacts are provided by residues 456–458, Y493, R548, and 551–552; these read KGW and NH. Zn(2+) contacts are provided by C554, C612, C614, and C619. The 17-residue stretch at 608-624 folds into the Post-SET domain; that stretch reads KQLACYCGALNCRKRLY.

The protein belongs to the class V-like SAM-binding methyltransferase superfamily. Histone-lysine methyltransferase family. Suvar3-9 subfamily. Interacts with H3 histone. As to expression, expressed in leaves stems and flowers.

It is found in the nucleus. Its subcellular location is the chromosome. The protein localises to the centromere. It carries out the reaction N(6)-methyl-L-lysyl(9)-[histone H3] + S-adenosyl-L-methionine = N(6),N(6)-dimethyl-L-lysyl(9)-[histone H3] + S-adenosyl-L-homocysteine + H(+). The catalysed reaction is L-lysyl(9)-[histone H3] + S-adenosyl-L-methionine = N(6)-methyl-L-lysyl(9)-[histone H3] + S-adenosyl-L-homocysteine + H(+). Functionally, histone methyltransferase. Methylates 'Lys-9' of histone H3. H3 'Lys-9' methylation represents a specific tag for epigenetic transcriptional repression. The silencing mechanism via DNA CpNpG methylation requires the targeting of chromomethylase CMT3 to methylated histones, probably through an interaction with an HP1-like adapter. By its function, KYP is directly required for the maintenance of the DNA CpNpG and asymmetric methylation. Involved in the silencing of transposable elements. The protein is Histone-lysine N-methyltransferase, H3 lysine-9 specific SUVH4 (SUVH4) of Arabidopsis thaliana (Mouse-ear cress).